We begin with the raw amino-acid sequence, 722 residues long: A-type ATP synthase subunit I (722 aa).

Residues 309–321 (DYKPTGHDQHVPA) are compositionally biased toward basic and acidic residues. A disordered region spans residues 309–352 (DYKPTGHDQHVPADDGADAATDGGTTASFDETDSPPVIQDNPGP). The span at 326-335 (DAATDGGTTA) shows a compositional bias: low complexity. The next 8 helical transmembrane spans lie at 384–404 (FYGFMIGDLGYGVLYALLGFW), 419–439 (GVAMWAGGFTALFGVLYGEVF), 474–494 (LAASLVFGIAHLAIGYVFGFV), 505–525 (AALESGGQLLLMAGVGVWLFS), 554–574 (LAAAVVGLVLVTLGEGAAGFL), 590–610 (IAAVLLAKAGMAYVVNLLVFG), 639–659 (FMLFSGEAHGEVLFPGLMHMG), and 662–682 (GILIGVLVLLVGHALVLALGV).

This sequence belongs to the V-ATPase 116 kDa subunit family. In terms of assembly, has multiple subunits with at least A(3), B(3), C, D, E, F, H, I and proteolipid K(x).

The protein localises to the cell membrane. Functionally, component of the A-type ATP synthase that produces ATP from ADP in the presence of a proton gradient across the membrane. This Halobacterium salinarum (strain ATCC 700922 / JCM 11081 / NRC-1) (Halobacterium halobium) protein is A-type ATP synthase subunit I.